The sequence spans 341 residues: 5-formaminoimidazole-4-carboxamide-1-(beta)-D-ribofuranosyl 5'-monophosphate synthetase (341 aa).

5-amino-1-(5-phospho-beta-D-ribosyl)imidazole-4-carboxamide contacts are provided by H10 and T77. Positions 106–317 (DRSLKERLMR…YYGLLFDEPI (212 aa)) constitute an ATP-grasp domain. ATP is bound by residues 132-188 (DTLV…VLAY) and E210. Position 238 (N238) interacts with 5-amino-1-(5-phospho-beta-D-ribosyl)imidazole-4-carboxamide. The Mg(2+) site is built by E277 and E290.

Belongs to the phosphohexose mutase family. The cofactor is Mg(2+). It depends on Mn(2+) as a cofactor.

It carries out the reaction 5-amino-1-(5-phospho-beta-D-ribosyl)imidazole-4-carboxamide + formate + ATP = 5-formamido-1-(5-phospho-D-ribosyl)imidazole-4-carboxamide + ADP + phosphate. The protein operates within purine metabolism; IMP biosynthesis via de novo pathway; 5-formamido-1-(5-phospho-D-ribosyl)imidazole-4-carboxamide from 5-amino-1-(5-phospho-D-ribosyl)imidazole-4-carboxamide (formate route): step 1/1. Functionally, catalyzes the ATP- and formate-dependent formylation of 5-aminoimidazole-4-carboxamide-1-beta-d-ribofuranosyl 5'-monophosphate (AICAR) to 5-formaminoimidazole-4-carboxamide-1-beta-d-ribofuranosyl 5'-monophosphate (FAICAR) in the absence of folates. The chain is 5-formaminoimidazole-4-carboxamide-1-(beta)-D-ribofuranosyl 5'-monophosphate synthetase from Cenarchaeum symbiosum (strain A).